The following is a 409-amino-acid chain: Outer membrane protein YopM (409 aa).

LRR repeat units follow at residues 72-91 (QAHELELNNLGLSSLPELPP), 92-113 (HLESLVASCNSLTELPELPQSL), 114-131 (KSLLVDNNNLKALSDLPP), 132-153 (LLEYLGVSNNQLEKLPELQNSS), 154-173 (FLKIIDVDNNSLKKLPDLPP), 174-195 (SLEFIAAGNNQLEELPELQNLP), 196-215 (FLTAIYADNNSLKKLPDLPL), 216-237 (SLESIVAGNNILEELPELQNLP), 238-257 (FLTTIYADNNLLKTLPDLPP), 258-279 (SLEALNVRDNYLTDLPELPQSL), 280-297 (TFLDVSENIFSGLSELPP), 298-317 (NLYYLNASSNEIRSLCDLPP), 318-339 (SLEELNVSNNKLIELPALPPRL), 340-357 (ERLIASFNHLAEVPELPQ), and 358-379 (NLKQLHVEYNPLREFPDIPESV). Ca(2+) contacts are provided by asparagine 246 and aspartate 266. Ca(2+)-binding residues include asparagine 307, glutamate 308, and asparagine 326.

Belongs to the LRR-containing bacterial E3 ligase family. Homotetramer forming a hollow cylinder with an inner diameter of approximately 35 angstroms.

Its subcellular location is the cell outer membrane. It localises to the secreted. Functionally, effector proteins function to alter host cell physiology and promote bacterial survival in host tissues. This Yersinia pestis protein is Outer membrane protein YopM (yopM).